Here is a 120-residue protein sequence, read N- to C-terminus: uncharacterized protein (120 aa).

The first 27 residues, 1–27 (MPKIGVSLIVLIMLIIFLAGCNKNEQN), serve as a signal peptide directing secretion.

This is an uncharacterized protein from Bacillus subtilis (strain 168).